An 874-amino-acid polypeptide reads, in one-letter code: Alanine--tRNA ligase (874 aa).

4 residues coordinate Zn(2+): H563, H567, C665, and H669.

The protein belongs to the class-II aminoacyl-tRNA synthetase family. Zn(2+) serves as cofactor.

It localises to the cytoplasm. The catalysed reaction is tRNA(Ala) + L-alanine + ATP = L-alanyl-tRNA(Ala) + AMP + diphosphate. Functionally, catalyzes the attachment of alanine to tRNA(Ala) in a two-step reaction: alanine is first activated by ATP to form Ala-AMP and then transferred to the acceptor end of tRNA(Ala). Also edits incorrectly charged Ser-tRNA(Ala) and Gly-tRNA(Ala) via its editing domain. In Aeromonas salmonicida (strain A449), this protein is Alanine--tRNA ligase.